We begin with the raw amino-acid sequence, 160 residues long: MERVSGLLSWTLSRFLWLSGLSEPGAARQPRIMEEKALEVYDLIRTIRDPEKPNTLEELEVVTESCVEVQEINEDDYLVIIRFTPTVPHCSLATLIGLCLRVKLQRCLPFKHKLEIYISEGTHSTEEDINKQINDKERVAAAMENPNLREIVEQCVLEPD.

4 residues coordinate Zn(2+): histidine 89, histidine 123, glutamate 150, and glutamate 153.

It belongs to the MIP18 family. Monomer and homodimer. Component of the CIA complex. Interacts with CIAO1. Interacts with IREB2. Interacts with APAF1.

It is found in the cytoplasm. In terms of biological role, component of the cytosolic iron-sulfur protein assembly (CIA) complex, a multiprotein complex that mediates the incorporation of iron-sulfur cluster into extramitochondrial Fe/S proteins. As a CIA complex component and in collaboration with CIAO1 specifically matures ACO1 and stabilizes IREB2, connecting cytosolic iron-sulfur protein maturation with cellular iron regulation. May play a role in chromosome segregation through establishment of sister chromatid cohesion. May induce apoptosis in collaboration with APAF1. This Bos taurus (Bovine) protein is Cytosolic iron-sulfur assembly component 2A.